We begin with the raw amino-acid sequence, 474 residues long: Recombinase Flp protein (474 aa).

A Tyr recombinase Flp-type domain is found at 135 to 421 (LSNNVGAEIS…LYLYTYAQQK (287 aa)). The active-site O-(3'-phospho-DNA)-tyrosine intermediate is Y342. The tract at residues 426 to 474 (ADPNEQNRLFSSESPAHPFLTPQSTGSSTPLTWTAPKTLSTGLMTPGEE) is disordered. 2 stretches are compositionally biased toward polar residues: residues 429-439 (NEQNRLFSSES) and 446-468 (TPQS…STGL).

This sequence belongs to the 'phage' integrase family.

Its function is as follows. Catalyzes the recombination between the large inverted repetitions of the plasmid. The protein is Recombinase Flp protein of Zygosaccharomyces bailii.